Reading from the N-terminus, the 205-residue chain is MSSRKKVMLKVIILGDSGVGKTSLMNQYVNKKFSGSYKATIGADFLTKEVLVDDRLVTMQIWDTAGQERFQSLGVAFYRGADCCVLVYDVNNSKSFEALDSWRDEFLIQASPRDPESFPFVVIGNKIDMEESKRMISSKRAMTFCQSKGNIPYFETSAKEAVNVEQAFEVIARSALAQEEAEEYGGDYTDPINIHDTTERDGCAC.

GTP-binding positions include 17–23 (SGVGKTS), 33–40 (FSGSYKAT), Gly66, 125–128 (NKID), and 157–159 (SAK). The short motif at 37–45 (YKATIGADF) is the Effector region element. Residues Cys203 and Cys205 are each lipidated (S-geranylgeranyl cysteine). Cys205 is modified (cysteine methyl ester).

The protein belongs to the small GTPase superfamily. Rab family.

Its activity is regulated as follows. Rab activation is generally mediated by a guanine exchange factor (GEF), while inactivation through hydrolysis of bound GTP is catalyzed by a GTPase activating protein (GAP). Ypt/Rab-type GTPases are key regulators of membrane trafficking and intracellular vesicular transport. They act as molecular switches that convert between GTP-bound and GDP-bound states, and regulate virtually all steps of membrane traffic from the formation of the transport vesicle at the donor membrane to its fusion at the target membrane. In the GDP-bound state, Ypt proteins are predominantly cytosolic, solubilized through the interaction with a GDP dissociation inhibitor (GDI). In the GTP-bound state, the proteins are membrane bound and interact with specific effector proteins that select cargo, promote vesicle movement, or verify the correct site of fusion. AvaA functions in vacuolar biogenesis. In Emericella nidulans (strain FGSC A4 / ATCC 38163 / CBS 112.46 / NRRL 194 / M139) (Aspergillus nidulans), this protein is Ypt/Rab-type GTPase avaA.